Consider the following 249-residue polypeptide: Phosphomannomutase 2 (249 aa).

Asp12 (nucleophile) is an active-site residue. The Mg(2+) site is built by Asp12 and Asp14. Asp14 (proton donor/acceptor) is an active-site residue. Residues Arg21, Arg123, Arg134, Arg141, Ser179, and Asp181 each coordinate alpha-D-mannose 1-phosphate. Asp209 is a binding site for Mg(2+).

This sequence belongs to the eukaryotic PMM family. In terms of assembly, homodimer.

Its subcellular location is the cytoplasm. It catalyses the reaction alpha-D-mannose 1-phosphate = D-mannose 6-phosphate. The protein operates within nucleotide-sugar biosynthesis; GDP-alpha-D-mannose biosynthesis; alpha-D-mannose 1-phosphate from D-fructose 6-phosphate: step 2/2. Involved in the synthesis of the GDP-mannose and dolichol-phosphate-mannose required for a number of critical mannosyl transfer reactions. This is Phosphomannomutase 2 (pmmB) from Dictyostelium discoideum (Social amoeba).